A 157-amino-acid polypeptide reads, in one-letter code: MPRPTKFRRVEFFPENNYFVPWGKPKCEIHEVVLKVEELEAMRLKDIEELNQEQCAEKMEISRQTFQNIIDSARKKVAIALTEGKAIKISGGHYTTKLCKLKCIDCEEIYEINYEQDRHLCPNCGSEKVICNKKADFCRRWCKGQNRKEQYEESKNK.

This sequence belongs to the UPF0251 family.

In Clostridium botulinum (strain Kyoto / Type A2), this protein is UPF0251 protein CLM_1546.